The following is a 182-amino-acid chain: NAD(P)H-quinone oxidoreductase subunit I, chloroplastic (182 aa).

2 4Fe-4S ferredoxin-type domains span residues 52–81 (GRIHFEFDKCIACEVCVRVCPINLPVVDWE) and 92–121 (KSYSIDFGVCIFCGNCVEYCPTNCLSMTEE). 8 residues coordinate [4Fe-4S] cluster: C61, C64, C67, C71, C101, C104, C107, and C111.

Belongs to the complex I 23 kDa subunit family. In terms of assembly, NDH is composed of at least 16 different subunits, 5 of which are encoded in the nucleus. It depends on [4Fe-4S] cluster as a cofactor.

The protein localises to the plastid. Its subcellular location is the chloroplast thylakoid membrane. It catalyses the reaction a plastoquinone + NADH + (n+1) H(+)(in) = a plastoquinol + NAD(+) + n H(+)(out). The catalysed reaction is a plastoquinone + NADPH + (n+1) H(+)(in) = a plastoquinol + NADP(+) + n H(+)(out). NDH shuttles electrons from NAD(P)H:plastoquinone, via FMN and iron-sulfur (Fe-S) centers, to quinones in the photosynthetic chain and possibly in a chloroplast respiratory chain. The immediate electron acceptor for the enzyme in this species is believed to be plastoquinone. Couples the redox reaction to proton translocation, and thus conserves the redox energy in a proton gradient. This chain is NAD(P)H-quinone oxidoreductase subunit I, chloroplastic, found in Chaetosphaeridium globosum (Charophycean green alga).